The chain runs to 512 residues: Putative UDP-glucuronosyltransferase ugt-55 (512 aa).

The signal sequence occupies residues 1 to 22; it reads MQLLTLPTLIFIFLNYGTPCLS. A helical membrane pass occupies residues 487–507; that stretch reads ILLYLDSIAMFTLTLLTMILI.

The protein belongs to the UDP-glycosyltransferase family.

It localises to the membrane. The enzyme catalyses glucuronate acceptor + UDP-alpha-D-glucuronate = acceptor beta-D-glucuronoside + UDP + H(+). The sequence is that of Putative UDP-glucuronosyltransferase ugt-55 (ugt-55) from Caenorhabditis elegans.